The sequence spans 149 residues: Thiosulfate sulfurtransferase RDL2, mitochondrial (149 aa).

A mitochondrion-targeting transit peptide spans 1 to 25; the sequence is MFKHSTGILSRTVSARSPTLVLRTF. Residues 45–146 enclose the Rhodanese domain; it reads PNDKKLLVDV…WLAKGGADVK (102 aa). The active-site Cysteine persulfide intermediate is cysteine 106.

Its subcellular location is the mitochondrion. The enzyme catalyses thiosulfate + hydrogen cyanide = thiocyanate + sulfite + 2 H(+). Functionally, thiosulfate sulfurtransferase which catalyzes the transfer of sulfane sulfur from thiosulfate to cyanide. This chain is Thiosulfate sulfurtransferase RDL2, mitochondrial (RDL2), found in Saccharomyces cerevisiae (strain ATCC 204508 / S288c) (Baker's yeast).